Reading from the N-terminus, the 53-residue chain is MAKWRCKICGYIYDEDEGDPDNGISPGTKFEDLPDDWVCPLCGAPKSEFERIE.

One can recognise a Rubredoxin-like domain in the interval 1 to 52 (MAKWRCKICGYIYDEDEGDPDNGISPGTKFEDLPDDWVCPLCGAPKSEFERI). Fe cation is bound by residues cysteine 6, cysteine 9, cysteine 39, and cysteine 42.

Belongs to the rubredoxin family. Fe(3+) is required as a cofactor.

In terms of biological role, rubredoxin is a small nonheme, iron protein lacking acid-labile sulfide. Its single Fe, chelated to 4 Cys, functions as an electron acceptor and may also stabilize the conformation of the molecule. The protein is Rubredoxin (rub) of Pyrococcus abyssi (strain GE5 / Orsay).